The chain runs to 891 residues: uncharacterized protein (891 aa).

Basic and acidic residues predominate over residues 48–64 (GHKKPRSESRKKYDAKK). The interval 48-86 (GHKKPRSESRKKYDAKKQHQSSHFATPVKGVESSEPTEK) is disordered. Phosphoserine occurs at positions 261, 263, 265, and 268. The segment at 795-822 (QRTFSNESPRAVDSGFSRTSTPFSESTS) is disordered. Residues 810 to 822 (FSRTSTPFSESTS) show a composition bias toward polar residues.

It is found in the nucleus. This is an uncharacterized protein from Schizosaccharomyces pombe (strain 972 / ATCC 24843) (Fission yeast).